A 171-amino-acid chain; its full sequence is Actin-related protein 2/3 complex subunit 4 (171 aa).

It belongs to the ARPC4 family. As to quaternary structure, component of the Arp2/3 complex composed of ARP2, ARP3, ARC40/p41-ARC, ARC35/p34-ARC, ARC18/p21-ARC, ARC19/p20-ARC and ARC16/p16-ARC.

It is found in the cytoplasm. Its subcellular location is the cytoskeleton. The protein localises to the actin patch. Functions as actin-binding component of the Arp2/3 complex which is involved in regulation of actin polymerization and together with an activating nucleation-promoting factor (NPF) mediates the formation of branched actin networks. Seems to contact the mother actin filament. The sequence is that of Actin-related protein 2/3 complex subunit 4 (ARC19) from Saccharomyces cerevisiae (strain ATCC 204508 / S288c) (Baker's yeast).